The primary structure comprises 284 residues: 4-hydroxybenzoate octaprenyltransferase (284 aa).

7 helical membrane-spanning segments follow: residues 13–32 (FNRP…ALWL), 90–110 (ALML…FTDL), 112–132 (TILL…MKRY), 134–154 (HLPQ…AYSA), 164–184 (LWML…YYAM), 200–220 (ILFG…TLSL), and 224–244 (IGLL…CVGL).

It belongs to the UbiA prenyltransferase family. Mg(2+) serves as cofactor.

The protein localises to the cell inner membrane. It carries out the reaction all-trans-octaprenyl diphosphate + 4-hydroxybenzoate = 4-hydroxy-3-(all-trans-octaprenyl)benzoate + diphosphate. It participates in cofactor biosynthesis; ubiquinone biosynthesis. Functionally, catalyzes the prenylation of para-hydroxybenzoate (PHB) with an all-trans polyprenyl group. Mediates the second step in the final reaction sequence of ubiquinone-8 (UQ-8) biosynthesis, which is the condensation of the polyisoprenoid side chain with PHB, generating the first membrane-bound Q intermediate 3-octaprenyl-4-hydroxybenzoate. In Marinomonas sp. (strain MWYL1), this protein is 4-hydroxybenzoate octaprenyltransferase.